We begin with the raw amino-acid sequence, 258 residues long: Tryptophan synthase alpha chain (258 aa).

Catalysis depends on proton acceptor residues E47 and D58.

It belongs to the TrpA family. In terms of assembly, tetramer of two alpha and two beta chains.

It carries out the reaction (1S,2R)-1-C-(indol-3-yl)glycerol 3-phosphate + L-serine = D-glyceraldehyde 3-phosphate + L-tryptophan + H2O. It functions in the pathway amino-acid biosynthesis; L-tryptophan biosynthesis; L-tryptophan from chorismate: step 5/5. Its function is as follows. The alpha subunit is responsible for the aldol cleavage of indoleglycerol phosphate to indole and glyceraldehyde 3-phosphate. This chain is Tryptophan synthase alpha chain, found in Bacillus thuringiensis (strain Al Hakam).